The following is a 363-amino-acid chain: Peptide chain release factor 2 (363 aa).

Q251 carries the N5-methylglutamine modification.

It belongs to the prokaryotic/mitochondrial release factor family. Methylated by PrmC. Methylation increases the termination efficiency of RF2.

It is found in the cytoplasm. Its function is as follows. Peptide chain release factor 2 directs the termination of translation in response to the peptide chain termination codons UGA and UAA. This Helicobacter pylori (strain Shi470) protein is Peptide chain release factor 2.